A 336-amino-acid chain; its full sequence is Carbamoyl dehydratase HypE (336 aa).

S-carbamoylcysteine; by HypF; alternate is present on Cys336. Position 336 is an S-cyanocysteine; by autocatalysis; alternate (Cys336).

Belongs to the HypE family. As to quaternary structure, homodimer. Forms a complex with HypF. Also forms a complex with HypC, or HybG, and HypD. Modified by HypF, which adds a carboxamido group to the thiolate of the C-terminal cysteine, yielding a protein-S-carboxamide. The carboxamido group is then dehydrated by HypE itself to yield a protein-thiocyanate.

The catalysed reaction is C-terminal S-carboxamide-L-cysteinyl-[HypE protein] + ATP = C-terminal S-cyanate-L-cysteinyl-[HypE protein] + ADP + phosphate + H(+). It functions in the pathway protein modification; [NiFe] hydrogenase maturation. Involved in the maturation of [NiFe] hydrogenases. Along with HypF, it catalyzes the synthesis of the CN ligands of the active site iron of [NiFe]-hydrogenases. HypE catalyzes the ATP-dependent dehydration of the carboxamido group attached to its C-terminal cysteine to a cyano group. The cyano group is then transferred from HypE to the HypC-HypD complex or the HybG-HypD complex. This Escherichia coli (strain K12) protein is Carbamoyl dehydratase HypE.